The sequence spans 610 residues: T-cell immunomodulatory protein (610 aa).

A signal peptide spans Met1–Ala32. N-linked (GlcNAc...) asparagine glycans are attached at residues Asn35, Asn94, Asn123, Asn138, Asn145, Asn150, Asn175, and Asn241. An FG-GAP 1; atypical repeat occupies Leu98–Trp135. The FG-GAP 2; atypical repeat unit spans residues Phe153–Leu183. The stretch at Val256–Met291 is one FG-GAP 3; atypical repeat. N-linked (GlcNAc...) asparagine glycosylation is found at Asn351, Asn369, and Asn480. A helical transmembrane segment spans residues Ile564 to Ala584.

This sequence belongs to the TIP family. In terms of assembly, interacts with RUVBL1, RUVBL2 and alpha-tubulin.

It localises to the secreted. Its subcellular location is the cell membrane. Modulator of T-cell function. Has a protective effect in graft versus host disease model. The protein is T-cell immunomodulatory protein of Rattus norvegicus (Rat).